Consider the following 430-residue polypeptide: Mucorpepsin (430 aa).

The first 22 residues, 1–22 (MLFSQITSAILLTAASLSLTTA), serve as a signal peptide directing secretion. Positions 23–69 (RPVSKQSESKDKLLALPLTSVSRKFSQTKFGQQQLAEKLAGLKPFSE) are cleaved as a propeptide — activation peptide. The Peptidase A1 domain maps to 89 to 421 (YAIPVSIGTP…DFGNNRIGFA (333 aa)). Asp-107 is an active-site residue. Cys-120 and Cys-126 are joined by a disulfide. N-linked (GlcNAc...) asparagine glycans are attached at residues Asn-148 and Asn-257. Asp-306 is an active-site residue. Cysteines 341 and 385 form a disulfide.

The protein belongs to the peptidase A1 family.

It catalyses the reaction Hydrolysis of proteins, favoring hydrophobic residues at P1 and P1'. Clots milk. Does not accept Lys at P1, and hence does not activate trypsinogen.. This enzyme, capable of clotting milk is frequently used for cheese production. This Rhizomucor miehei protein is Mucorpepsin.